Reading from the N-terminus, the 69-residue chain is Defensin-like protein 166 (69 aa).

The signal sequence occupies residues 1–15 (MIIVIIFLVIYFNNQ). Cystine bridges form between cysteine 19/cysteine 68, cysteine 24/cysteine 44, cysteine 29/cysteine 62, and cysteine 33/cysteine 64.

Belongs to the DEFL family.

It is found in the secreted. The sequence is that of Defensin-like protein 166 from Arabidopsis thaliana (Mouse-ear cress).